The chain runs to 425 residues: MQKFRVYGQSRLRGSVNISGAKNAALPILFAAILAQEPVKLTNVPELKDIETTLKILRKLGVVVERDAEGAVHLDASKIDHFVAPYELVKTMRASIWALAPLVARFHRGQVSLPGGCSIGARPVDLHISGLERLGASIILEDGYVKAYVDHCLVGTRIVMEKVSVGATLSIMMAATLAKGKTIIENAAREPEITDTALFLNKMGAKIVGAGTDTITVEGVERLGGCEHSIVPDRIETGTFLVAAAISGGRIECKNTKADTLDAVIDKLREAGAQVDVTENSITLDMLGNRPRAVNIRTAPYPGFPTDMQAQFTLLNMVACGTSIITETIFENRFMHIPELIRMGGKAEIEGNTAICHGVDHLSGAEVMATDLRASISLVLAGCIATGETIVDRIYHIDRGYERIEEKLRGLGARIERFSAQSEES.

A phosphoenolpyruvate-binding site is contributed by lysine 22–asparagine 23. Arginine 93 is a UDP-N-acetyl-alpha-D-glucosamine binding site. Residue cysteine 117 is the Proton donor of the active site. Position 117 is a 2-(S-cysteinyl)pyruvic acid O-phosphothioketal (cysteine 117). Residues arginine 122–leucine 126, lysine 162–valine 165, aspartate 307, and isoleucine 329 each bind UDP-N-acetyl-alpha-D-glucosamine.

The protein belongs to the EPSP synthase family. MurA subfamily.

It localises to the cytoplasm. The catalysed reaction is phosphoenolpyruvate + UDP-N-acetyl-alpha-D-glucosamine = UDP-N-acetyl-3-O-(1-carboxyvinyl)-alpha-D-glucosamine + phosphate. Its pathway is cell wall biogenesis; peptidoglycan biosynthesis. In terms of biological role, cell wall formation. Adds enolpyruvyl to UDP-N-acetylglucosamine. This chain is UDP-N-acetylglucosamine 1-carboxyvinyltransferase, found in Pasteurella multocida (strain Pm70).